The chain runs to 306 residues: tRNA pseudouridine synthase B (306 aa).

Aspartate 39 serves as the catalytic Nucleophile.

This sequence belongs to the pseudouridine synthase TruB family. Type 1 subfamily.

It catalyses the reaction uridine(55) in tRNA = pseudouridine(55) in tRNA. Responsible for synthesis of pseudouridine from uracil-55 in the psi GC loop of transfer RNAs. The polypeptide is tRNA pseudouridine synthase B (Arthrobacter sp. (strain FB24)).